The chain runs to 63 residues: Small ribosomal subunit protein bS21 (63 aa).

This sequence belongs to the bacterial ribosomal protein bS21 family.

This Azobacteroides pseudotrichonymphae genomovar. CFP2 protein is Small ribosomal subunit protein bS21.